The following is a 96-amino-acid chain: UPF0235 protein CAB243 (96 aa).

This sequence belongs to the UPF0235 family.

The chain is UPF0235 protein CAB243 from Chlamydia abortus (strain DSM 27085 / S26/3) (Chlamydophila abortus).